The following is a 213-amino-acid chain: Glycerol-3-phosphate acyltransferase (213 aa).

The next 6 membrane-spanning stretches (helical) occupy residues 4 to 24 (IILLLIASYLLGAIPFGLWIG), 48 to 68 (ILGVKAGISVFAFDLLKGTLA), 71 to 91 (LPLFFHINGVSPLIFGLLAVI), 113 to 133 (VILGFSPLFLIYLLVVFIIVL), 144 to 164 (VIGAVFALLGILIFPSIGFIL), and 165 to 185 (TSYDLLFSIIIFVLAIIIILR).

It belongs to the PlsY family. In terms of assembly, probably interacts with PlsX.

The protein localises to the cell membrane. The catalysed reaction is an acyl phosphate + sn-glycerol 3-phosphate = a 1-acyl-sn-glycero-3-phosphate + phosphate. Its pathway is lipid metabolism; phospholipid metabolism. Functionally, catalyzes the transfer of an acyl group from acyl-phosphate (acyl-PO(4)) to glycerol-3-phosphate (G3P) to form lysophosphatidic acid (LPA). This enzyme utilizes acyl-phosphate as fatty acyl donor, but not acyl-CoA or acyl-ACP. The sequence is that of Glycerol-3-phosphate acyltransferase from Lactococcus lactis subsp. lactis (strain IL1403) (Streptococcus lactis).